A 203-amino-acid chain; its full sequence is Tic20 family protein Ycf60 (203 aa).

5 helical membrane-spanning segments follow: residues 2–22, 51–71, 84–104, 131–151, and 153–173; these read IRLF…RLAI, IIPY…YVLP, ILLP…VTFF, ILLF…PIEF, and ISFI…STIT.

Belongs to the Tic20 family.

It is found in the plastid. It localises to the chloroplast membrane. The chain is Tic20 family protein Ycf60 (ycf60) from Porphyra purpurea (Red seaweed).